The primary structure comprises 879 residues: MKFMGANELREKYLSFFESKDHLRLQSFPLVPKNDKSLLLINAGMAPLKPYFTGLEEPPKRRITTCQKCIRTGDIENVGKTSRHGTFFEMLGNFSFGDYFKSEIIPWAWEFITETLGIPKDKLYVTIYLNDDEAYDIWTSKTDVDPSRIFRLGKDDNFWEIGVGPCGPCTEIHFDRGEGKVETVEEFLEASDADRIVEFWNLVFTQFDKDEEGNYNELAQKNIDTGMGLERIATIMQGVDNIFEIDTVKNILNKACELTNAKYGEDKDKDVSLRIITDHGKSVTFLICDGVQPSNEGRGYVLRRLLRRAARHGRLLGVKGIFLNEMVDAVVENYGEAYPELKEKADYIKKIIKLEEERFNETIDSGMDILMSYISEMEEKNEKVLSGAKAFKLYDTYGFPLELTQEILEEKGLELDIENFNKEMKEQRERARNARGESSYMGSEESPVNKVDASIVTEFDGYVNLELNSKVIVLGNNEEFKSELKEGEEGFLLTDKTPFYAEMGGQVGDRGNITSETGMAIVTDCKKNVGGKFVHYIKVIEGSLKEGQEVKLSVDASRRSNICKNHTATHMLHEALKEVLGDHVNQSGSYVDEERLRFDFTHFAALTEEELEKVELLVNEKIMTVSVVDTKEMSLDEARNSGATCLFDEKYAEKVRVVSVGDFSKELCGGTHVANSGEIGLFKIVSESGVAAGIRRIEAVTGISALKFMELKNNMLKEAASMLKCNEKDIAKRIAAQAHELKEKDKEIAELKAKLVQGAEDDILKDKVEINGVELVTAELKDVDGNSLRDLADKVRNKLNNGIVVLASDNGGKVNLVAMATKNSLANGVHCGKVIKEVAAVVGGGGGGRPDMAQAGGKNPENIAKALEKAKEVVELLVK.

Zn(2+) contacts are provided by His-566, His-570, Cys-668, and His-672.

The protein belongs to the class-II aminoacyl-tRNA synthetase family. Requires Zn(2+) as cofactor.

The protein localises to the cytoplasm. It catalyses the reaction tRNA(Ala) + L-alanine + ATP = L-alanyl-tRNA(Ala) + AMP + diphosphate. Catalyzes the attachment of alanine to tRNA(Ala) in a two-step reaction: alanine is first activated by ATP to form Ala-AMP and then transferred to the acceptor end of tRNA(Ala). Also edits incorrectly charged Ser-tRNA(Ala) and Gly-tRNA(Ala) via its editing domain. The sequence is that of Alanine--tRNA ligase from Clostridium perfringens (strain ATCC 13124 / DSM 756 / JCM 1290 / NCIMB 6125 / NCTC 8237 / Type A).